We begin with the raw amino-acid sequence, 367 residues long: Heme A synthase (367 aa).

5 helical membrane-spanning segments follow: residues 26–46, 111–131, 139–159, 174–194, and 212–232; these read IRGW…VGGA, LLAR…WLTG, LPLL…WWMV, LATH…IYRG, and AGII…VAGL. A heme-binding site is contributed by H274. 3 helical membrane passes run 276 to 296, 305 to 325, and 327 to 347; these read AGAY…LRAA, SVLL…TLLL, and VPIV…GFAI. Residue H335 coordinates heme.

This sequence belongs to the COX15/CtaA family. Type 2 subfamily. As to quaternary structure, interacts with CtaB. Requires heme b as cofactor.

The protein localises to the cell membrane. It carries out the reaction Fe(II)-heme o + 2 A + H2O = Fe(II)-heme a + 2 AH2. Its pathway is porphyrin-containing compound metabolism; heme A biosynthesis; heme A from heme O: step 1/1. Its function is as follows. Catalyzes the conversion of heme O to heme A by two successive hydroxylations of the methyl group at C8. The first hydroxylation forms heme I, the second hydroxylation results in an unstable dihydroxymethyl group, which spontaneously dehydrates, resulting in the formyl group of heme A. The chain is Heme A synthase from Sinorhizobium fredii (strain NBRC 101917 / NGR234).